The sequence spans 368 residues: MNAKIKVLLVDDSAVVRQVLQQVLERDKNIEVIGAAADPIFAQLRMSKQWPDVIVLDVEMPRMDGITFLKKLMAERPTPVVMCSTLTSKGAQTSMKALAAGAVAVVAKPAVGVKEYLESAAGELIMEIKAAAKANMRNMPAATASAQSMALPAKFSADAVIPLRTGGVIAGANKIAALGTSTGGTQALEYVLTRLPRNCPGIVIVQHMPEKFTAAFAERLNSICELEILEAESGHQVAPGRALIAPGGKHMLLRRSGAQYFVEIMSGPPVNRHRPSVDVLFRSVAQAAGRNALGVIMTGMGDDGAKGLLEMRNAGALTIGQDERSCIVYGMPKEAAKIGAVTREISLERIPQCVLDMGASLTASAQRG.

The 118-residue stretch at 6–123 (KVLLVDDSAV…KEYLESAAGE (118 aa)) folds into the Response regulatory domain. Asp57 carries the post-translational modification 4-aspartylphosphate. Residues 169–355 (IAGANKIAAL…SLERIPQCVL (187 aa)) enclose the CheB-type methylesterase domain. Residues Ser181, His207, and Asp303 contribute to the active site.

Belongs to the CheB family. Post-translationally, phosphorylated by CheA. Phosphorylation of the N-terminal regulatory domain activates the methylesterase activity.

The protein localises to the cytoplasm. It carries out the reaction [protein]-L-glutamate 5-O-methyl ester + H2O = L-glutamyl-[protein] + methanol + H(+). It catalyses the reaction L-glutaminyl-[protein] + H2O = L-glutamyl-[protein] + NH4(+). Involved in chemotaxis. Part of a chemotaxis signal transduction system that modulates chemotaxis in response to various stimuli. Catalyzes the demethylation of specific methylglutamate residues introduced into the chemoreceptors (methyl-accepting chemotaxis proteins or MCP) by CheR. Also mediates the irreversible deamidation of specific glutamine residues to glutamic acid. The protein is Protein-glutamate methylesterase/protein-glutamine glutaminase 2 of Hahella chejuensis (strain KCTC 2396).